The following is a 454-amino-acid chain: 3-phosphoshikimate 1-carboxyvinyltransferase (454 aa).

Residues 1 to 31 form a disordered region; it reads MSENHSEGASRPVISRRPAAGLRADHPVHVP. The 3-phosphoshikimate site is built by K34, S35, and R39. Position 34 (K34) interacts with phosphoenolpyruvate. G107 and R135 together coordinate phosphoenolpyruvate. Residues S180, Q182, D334, and K361 each contribute to the 3-phosphoshikimate site. Q182 contributes to the phosphoenolpyruvate binding site. The active-site Proton acceptor is the D334. 2 residues coordinate phosphoenolpyruvate: R365 and R409.

It belongs to the EPSP synthase family. In terms of assembly, monomer.

It localises to the cytoplasm. It carries out the reaction 3-phosphoshikimate + phosphoenolpyruvate = 5-O-(1-carboxyvinyl)-3-phosphoshikimate + phosphate. It participates in metabolic intermediate biosynthesis; chorismate biosynthesis; chorismate from D-erythrose 4-phosphate and phosphoenolpyruvate: step 6/7. Its function is as follows. Catalyzes the transfer of the enolpyruvyl moiety of phosphoenolpyruvate (PEP) to the 5-hydroxyl of shikimate-3-phosphate (S3P) to produce enolpyruvyl shikimate-3-phosphate and inorganic phosphate. The chain is 3-phosphoshikimate 1-carboxyvinyltransferase from Granulibacter bethesdensis (strain ATCC BAA-1260 / CGDNIH1).